A 295-amino-acid chain; its full sequence is 4-hydroxybenzoate octaprenyltransferase (295 aa).

Transmembrane regions (helical) follow at residues 28 to 48 (AGWL…AGGF), 51 to 71 (WHLL…GCCV), 101 to 121 (ALGV…TTNA), 124 to 144 (IAWS…KRFV), 159 to 179 (IPMA…WLVL), 220 to 240 (VMAF…PFGL), 242 to 262 (WPLH…WRLI), and 274 to 294 (FTGN…GFAL).

Belongs to the UbiA prenyltransferase family. It depends on Mg(2+) as a cofactor.

The protein localises to the cell inner membrane. The enzyme catalyses all-trans-octaprenyl diphosphate + 4-hydroxybenzoate = 4-hydroxy-3-(all-trans-octaprenyl)benzoate + diphosphate. Its pathway is cofactor biosynthesis; ubiquinone biosynthesis. Its function is as follows. Catalyzes the prenylation of para-hydroxybenzoate (PHB) with an all-trans polyprenyl group. Mediates the second step in the final reaction sequence of ubiquinone-8 (UQ-8) biosynthesis, which is the condensation of the polyisoprenoid side chain with PHB, generating the first membrane-bound Q intermediate 3-octaprenyl-4-hydroxybenzoate. The sequence is that of 4-hydroxybenzoate octaprenyltransferase from Paracidovorax citrulli (strain AAC00-1) (Acidovorax citrulli).